A 268-amino-acid chain; its full sequence is Secreted RxLR effector protein 5 (268 aa).

The N-terminal stretch at 1 to 21 (MRGAFYMAITLFLARSRSATA) is a signal peptide. The short motif at 48–63 (RYLRDGLALSAANEER) is the RxLR-dEER element. N-linked (GlcNAc...) asparagine glycosylation is present at asparagine 104.

It belongs to the RxLR effector family.

Its subcellular location is the secreted. It localises to the host nucleus. Its function is as follows. Effector that acts as a broad suppressor of cell death to interrupt plant immunity. Inhibits cell death induced by cell death-inducing proteins, including the PAMP elicitor INF1 from P.infestans. This is Secreted RxLR effector protein 5 from Plasmopara viticola (Downy mildew of grapevine).